Reading from the N-terminus, the 517-residue chain is Crotonobetaine/carnitine--CoA ligase (517 aa).

Belongs to the ATP-dependent AMP-binding enzyme family.

It catalyses the reaction 4-(trimethylamino)butanoate + ATP + CoA = 4-(trimethylamino)butanoyl-CoA + AMP + diphosphate. The enzyme catalyses crotonobetaine + ATP + CoA = crotonobetainyl-CoA + AMP + diphosphate. The catalysed reaction is (R)-carnitine + ATP + CoA = (R)-carnitinyl-CoA + AMP + diphosphate. It participates in amine and polyamine metabolism; carnitine metabolism. Functionally, catalyzes the transfer of CoA to carnitine, generating the initial carnitinyl-CoA needed for the CaiB reaction cycle. Also has activity toward crotonobetaine and gamma-butyrobetaine. This Salmonella arizonae (strain ATCC BAA-731 / CDC346-86 / RSK2980) protein is Crotonobetaine/carnitine--CoA ligase.